The chain runs to 212 residues: F-box protein GID2 (212 aa).

The disordered stretch occupies residues M1–P74. Over residues D35 to E59 the composition is skewed to low complexity. The 47-residue stretch at Q70–A116 folds into the F-box domain.

In terms of assembly, part of some SCF(GID2) complex, which consist of a SKP1 protein, CUL1, GID2 and some RING box protein. Interacts directly with SKP2 and SKP15. Interacts directly with DELLA protein SLR1. May have a higher affinity for phosphorylated SLR1 proteins. Widely expressed. Preferentially expressed in unopened flowers, shoot apices and elongation stem. Expressed at lower level in the leaf blades, leaf sheaths, roots and rachis.

It is found in the nucleus. The protein operates within protein modification; protein ubiquitination. Essential component of some SCF-type E3 ligase complex that positively regulates the gibberellin signaling pathway. Upon gibberellin treatment, the complex mediates the ubiquitination and subsequent degradation of DELLA protein SLR1, a repressor of the gibberellin pathway, leading to activate the pathway. This is F-box protein GID2 (GID2) from Oryza sativa subsp. japonica (Rice).